The following is a 265-amino-acid chain: Capsule polysaccharide export inner-membrane protein BexB (265 aa).

A run of 6 helical transmembrane segments spans residues 37–57 (IGFF…VMMW), 64–84 (KFST…AMMW), 118–138 (LLEV…LVMI), 151–171 (LIAW…ICAI), 178–198 (FGKI…AFFF), and 235–255 (ESIG…LVMV). Positions 37–258 (IGFFWLFVEP…LLGLVMVKNF (222 aa)) constitute an ABC transmembrane type-2 domain.

The protein belongs to the ABC-2 integral membrane protein family.

It localises to the cell inner membrane. In terms of biological role, may form an ATP-driven capsule polysaccharide export apparatus, in association with the BexA, BexC and BexD proteins. This Haemophilus influenzae protein is Capsule polysaccharide export inner-membrane protein BexB (bexB).